We begin with the raw amino-acid sequence, 393 residues long: Protein TsgA homolog (393 aa).

A run of 12 helical transmembrane segments spans residues 11–31 (WISF…GMVM), 51–71 (FLNA…EIIP), 78–98 (FGFV…SLAL), 101–121 (AAMF…TFLI), 134–154 (LLFT…VAAY), 162–182 (WYWV…LTFG), 206–226 (IGVL…LGFI), 245–265 (TLVS…SFIL), 273–293 (ILTV…KAQP), 297–317 (AWFI…IITL), 332–352 (FVLT…GPIV), and 361–381 (LLTA…LGFV).

The protein belongs to the major facilitator superfamily. TsgA family.

The protein localises to the cell inner membrane. This Citrobacter koseri (strain ATCC BAA-895 / CDC 4225-83 / SGSC4696) protein is Protein TsgA homolog.